Consider the following 426-residue polypeptide: ATP-dependent Clp protease ATP-binding subunit ClpX (426 aa).

Residues 1-52 form the ClpX-type ZB domain; sequence MNEIKKRCSFCNKEESLDNPIINSGITPDVYICNYCLIVGSEILTGYLNKNP. Positions 8, 11, 33, and 36 each coordinate Zn(2+). Residue 129 to 136 coordinates ATP; that stretch reads PTGSGKTL.

This sequence belongs to the ClpX chaperone family. As to quaternary structure, component of the ClpX-ClpP complex. Forms a hexameric ring that, in the presence of ATP, binds to fourteen ClpP subunits assembled into a disk-like structure with a central cavity, resembling the structure of eukaryotic proteasomes.

ATP-dependent specificity component of the Clp protease. It directs the protease to specific substrates. Can perform chaperone functions in the absence of ClpP. The polypeptide is ATP-dependent Clp protease ATP-binding subunit ClpX (Helicobacter hepaticus (strain ATCC 51449 / 3B1)).